The chain runs to 147 residues: Ponticulin-like protein C1 (147 aa).

A signal peptide spans 1–20 (MKFTKSLLLLIVAVFASSNA). Asn-118 carries GPI-like-anchor amidated asparagine lipidation. Asn-118 carries an N-linked (GlcNAc...) asparagine glycan. A propeptide spans 119–147 (SSESDSSDSTRIGASFALAASVLLSMLAI) (removed in mature form).

This sequence belongs to the ponticulin family. The GPI-like-anchor contains a phosphoceramide group, rather than a phosphatidyl group.

It is found in the cell membrane. The protein is Ponticulin-like protein C1 (ponC1) of Dictyostelium discoideum (Social amoeba).